Reading from the N-terminus, the 221-residue chain is 2-amino-5-formylamino-6-ribosylaminopyrimidin-4(3H)-one 5'-monophosphate deformylase (221 aa).

Residues Glu29, His31, Asp40, and His108 each contribute to the Fe cation site.

Belongs to the creatininase superfamily. FAPy deformylase family. In terms of assembly, homodimer. Fe(2+) is required as a cofactor. Zn(2+) serves as cofactor.

The enzyme catalyses 2-amino-5-formylamino-6-(5-phospho-D-ribosylamino)pyrimidin-4(3H)-one + H2O = 2,5-diamino-6-(1-D-ribosylamino)pyrimidin-4(3H)-one 5'-phosphate + formate + H(+). It participates in cofactor biosynthesis; coenzyme F420 biosynthesis. Its pathway is cofactor biosynthesis; riboflavin biosynthesis. In terms of biological role, catalyzes the hydrolysis of the formamide of 2-amino-5-formylamino-6-ribosylamino-4(3H)-pyrimidinone 5'-monophosphate (FAPy) to form 2,5-diamino-6-ribosylamino-4(3H)-pyrimidinone 5'-phosphate (APy). The protein is 2-amino-5-formylamino-6-ribosylaminopyrimidin-4(3H)-one 5'-monophosphate deformylase of Methanococcus maripaludis (strain C5 / ATCC BAA-1333).